The following is a 395-amino-acid chain: Chorismate synthase (395 aa).

Positions 40 and 46 each coordinate NADP(+). FMN-binding positions include 135-137 (RAS) and 256-257 (QA). A compositionally biased stretch (basic and acidic residues) spans 272–283 (RRGSQAHDEMRP). A disordered region spans residues 272 to 296 (RRGSQAHDEMRPGPDGILRSTNRAG). FMN-binding positions include G300, 315–319 (KPIST), and R341.

Belongs to the chorismate synthase family. In terms of assembly, homotetramer. Requires FMNH2 as cofactor.

The catalysed reaction is 5-O-(1-carboxyvinyl)-3-phosphoshikimate = chorismate + phosphate. It participates in metabolic intermediate biosynthesis; chorismate biosynthesis; chorismate from D-erythrose 4-phosphate and phosphoenolpyruvate: step 7/7. In terms of biological role, catalyzes the anti-1,4-elimination of the C-3 phosphate and the C-6 proR hydrogen from 5-enolpyruvylshikimate-3-phosphate (EPSP) to yield chorismate, which is the branch point compound that serves as the starting substrate for the three terminal pathways of aromatic amino acid biosynthesis. This reaction introduces a second double bond into the aromatic ring system. This is Chorismate synthase from Rhodococcus opacus (strain B4).